Here is a 108-residue protein sequence, read N- to C-terminus: UPF0060 membrane protein SAB2216c (108 aa).

Helical transmembrane passes span 5–25, 31–51, 60–80, and 86–106; these read IFIF…IWLW, CSLV…IATF, VYAA…MVVD, and KYDV…LLPS.

This sequence belongs to the UPF0060 family.

Its subcellular location is the cell membrane. This is UPF0060 membrane protein SAB2216c from Staphylococcus aureus (strain bovine RF122 / ET3-1).